Consider the following 419-residue polypeptide: Tyrosine--tRNA ligase 1 (419 aa).

Y35 contributes to the L-tyrosine binding site. A 'HIGH' region motif is present at residues P40–H49. The L-tyrosine site is built by Y172 and Q176. The 'KMSKS' region signature appears at K232 to T236. Residue K235 coordinates ATP. An S4 RNA-binding domain is found at Q353 to A418.

The protein belongs to the class-I aminoacyl-tRNA synthetase family. TyrS type 1 subfamily. Homodimer.

The protein resides in the cytoplasm. The enzyme catalyses tRNA(Tyr) + L-tyrosine + ATP = L-tyrosyl-tRNA(Tyr) + AMP + diphosphate + H(+). In terms of biological role, catalyzes the attachment of tyrosine to tRNA(Tyr) in a two-step reaction: tyrosine is first activated by ATP to form Tyr-AMP and then transferred to the acceptor end of tRNA(Tyr). In Vibrio parahaemolyticus serotype O3:K6 (strain RIMD 2210633), this protein is Tyrosine--tRNA ligase 1.